Here is a 397-residue protein sequence, read N- to C-terminus: MSKKKKWLIGGAICAGVLVLAGIGAGGFYFFTHMNQVAVSSEPYAESVAVYMGGDSESGQTFSGKVEPEKQQKVYIDSEKGSIKKTYVKEGDQVKKGDKLFEYEGEDHSDEVEQANLQIEMTNLQINRLQKSITETEKKLKVAGKEEKNQLQDELDQTNFDLKTSQLELKQHQKELAGLTKNKGSNVITSKHDGIVQSVNQDIADGATGDQAAGPYIQIVSTGKYLVKSQINELLMDTIKKGSKVRVTLKTGGEGEWKGKVTSIGKLPAGAGEGEESESFADEEMNPQSSNYPFTILLDSHKGLEVGYHVNIEVMSDNADADTIKLPSDMVIQDDGEPYVWKADENHKAVKQPVEIGETDENDMVEIKSGLTPEDYVIYPDPAVKEGKQVTVNADTE.

A helical transmembrane segment spans residues 8–28 (LIGGAICAGVLVLAGIGAGGF). Positions 106-183 (EDHSDEVEQA…KELAGLTKNK (78 aa)) form a coiled coil.

It belongs to the membrane fusion protein (MFP) (TC 8.A.1) family.

It localises to the cell membrane. This chain is Putative efflux system protein YvrP (yvrP), found in Bacillus subtilis (strain 168).